A 293-amino-acid chain; its full sequence is Homoserine kinase (293 aa).

80-90 (RPASGLGSSAA) is an ATP binding site.

The protein belongs to the GHMP kinase family. Homoserine kinase subfamily.

It is found in the cytoplasm. The enzyme catalyses L-homoserine + ATP = O-phospho-L-homoserine + ADP + H(+). Its pathway is amino-acid biosynthesis; L-threonine biosynthesis; L-threonine from L-aspartate: step 4/5. Its function is as follows. Catalyzes the ATP-dependent phosphorylation of L-homoserine to L-homoserine phosphate. The polypeptide is Homoserine kinase (Halorubrum lacusprofundi (strain ATCC 49239 / DSM 5036 / JCM 8891 / ACAM 34)).